A 503-amino-acid polypeptide reads, in one-letter code: Cytochrome c lysine N-methyltransferase 1 (503 aa).

The SET domain occupies 52-276 (SKFELLRIPR…EEAQVFISYA (225 aa)). An SET-like region spans residues 190-291 (NYEKLISTVY…VHFEQIYGFL (102 aa)).

Belongs to the class V-like SAM-binding methyltransferase superfamily.

It localises to the cytoplasm. The protein resides in the cytosol. It catalyses the reaction L-lysyl-[cytochrome c] + S-adenosyl-L-methionine = N(6)-methyl-L-lysyl-[cytochrome c] + S-adenosyl-L-homocysteine + H(+). In terms of biological role, methyltransferase which mediates trimethylation of cytochrome c (CYC1). In Kluyveromyces lactis (strain ATCC 8585 / CBS 2359 / DSM 70799 / NBRC 1267 / NRRL Y-1140 / WM37) (Yeast), this protein is Cytochrome c lysine N-methyltransferase 1 (CTM1).